The sequence spans 118 residues: Inner membrane protein YhaI (118 aa).

Over 1–25 (MQWYLSVLKNYVGFSGRARRKEYWM) the chain is Periplasmic. A helical transmembrane segment spans residues 26–46 (FTLINAIVGAIINVIQLILGL). Position 47 (Glu-47) is a topological domain, cytoplasmic. Residues 48–68 (LPYLSMLYLLATFLPVLALAI) form a helical membrane-spanning segment. Over 69–77 (RRLHDTDRS) the chain is Periplasmic. A helical membrane pass occupies residues 78 to 98 (GAWALLFFVPFIGWLVLLVFF). Residues 99–118 (CTEGTSGSNRYGNDPKFGSN) are Cytoplasmic-facing.

The protein to E.coli YhaH.

The protein resides in the cell inner membrane. This Escherichia coli O157:H7 protein is Inner membrane protein YhaI (yhaI).